Consider the following 330-residue polypeptide: Inositol 2-dehydrogenase (330 aa).

It belongs to the Gfo/Idh/MocA family.

The enzyme catalyses myo-inositol + NAD(+) = scyllo-inosose + NADH + H(+). It functions in the pathway polyol metabolism; myo-inositol degradation into acetyl-CoA; acetyl-CoA from myo-inositol: step 1/7. Functionally, involved in the oxidation of myo-inositol (MI) to 2-keto-myo-inositol (2KMI or 2-inosose). In Rhizobium meliloti (strain 1021) (Ensifer meliloti), this protein is Inositol 2-dehydrogenase (idhA).